We begin with the raw amino-acid sequence, 60 residues long: Large ribosomal subunit protein uL30 (60 aa).

The protein belongs to the universal ribosomal protein uL30 family. As to quaternary structure, part of the 50S ribosomal subunit.

The sequence is that of Large ribosomal subunit protein uL30 from Streptomyces griseus subsp. griseus (strain JCM 4626 / CBS 651.72 / NBRC 13350 / KCC S-0626 / ISP 5235).